The primary structure comprises 205 residues: Large ribosomal subunit protein uL18 (205 aa).

Belongs to the universal ribosomal protein uL18 family. Part of the 50S ribosomal subunit. Contacts the 5S and 23S rRNAs.

In terms of biological role, this is one of the proteins that bind and probably mediate the attachment of the 5S RNA into the large ribosomal subunit, where it forms part of the central protuberance. This is Large ribosomal subunit protein uL18 from Pyrobaculum arsenaticum (strain DSM 13514 / JCM 11321 / PZ6).